The primary structure comprises 270 residues: Interleukin-1 beta (270 aa).

Positions 1–118 are excised as a propeptide; the sequence is MATVPEPTSE…VYDDDAFVCD (118 aa).

Belongs to the IL-1 family. Monomer. In its precursor form, weakly interacts with full-length MEFV; the mature cytokine does not interact at all. Interacts with integrins ITGAV:ITGBV and ITGA5:ITGB1; integrin-binding is required for IL1B signaling. Interacts with cargo receptor TMED10; the interaction is direct and is required for the secretion of IL1B mature form. Interacts with HSP90AB1; the interaction facilitates cargo translocation into the ERGIC. Interacts with HSP90B1; the interaction facilitates cargo translocation into the ERGIC.

It localises to the cytoplasm. It is found in the cytosol. Its subcellular location is the secreted. The protein resides in the lysosome. The protein localises to the extracellular exosome. In terms of biological role, potent pro-inflammatory cytokine. Initially discovered as the major endogenous pyrogen, induces prostaglandin synthesis, neutrophil influx and activation, T-cell activation and cytokine production, B-cell activation and antibody production, and fibroblast proliferation and collagen production. Promotes Th17 differentiation of T-cells. Synergizes with IL12/interleukin-12 to induce IFNG synthesis from T-helper 1 (Th1) cells. Plays a role in angiogenesis by inducing VEGF production synergistically with TNF and IL6. Involved in transduction of inflammation downstream of pyroptosis: its mature form is specifically released in the extracellular milieu by passing through the gasdermin-D (GSDMD) pore. This chain is Interleukin-1 beta (IL1B), found in Phoca vitulina richardii (Pacific harbor seal).